We begin with the raw amino-acid sequence, 197 residues long: MRRIILASASPRRKELLRQLIGDNFLVSPSSYEEPPQPDLAPEELLIRHSIGKARDVAKHFSSGIIISADTSVLYNGEVLGKPNFPEKAEEMLKKLNGRKFRVVTGLTVLDLDSAQEISESESTDVWMSEMDDEQILAYVRTGEPLDKAGAFAAQGKGAVLIERIEGDFFNAVGLPLFRLGKILEKLGVSVFDESFS.

Asp70 functions as the Proton acceptor in the catalytic mechanism.

This sequence belongs to the Maf family. YhdE subfamily. It depends on a divalent metal cation as a cofactor.

It localises to the cytoplasm. It carries out the reaction dTTP + H2O = dTMP + diphosphate + H(+). The enzyme catalyses UTP + H2O = UMP + diphosphate + H(+). Functionally, nucleoside triphosphate pyrophosphatase that hydrolyzes dTTP and UTP. May have a dual role in cell division arrest and in preventing the incorporation of modified nucleotides into cellular nucleic acids. The protein is dTTP/UTP pyrophosphatase of Methanosarcina mazei (strain ATCC BAA-159 / DSM 3647 / Goe1 / Go1 / JCM 11833 / OCM 88) (Methanosarcina frisia).